Reading from the N-terminus, the 266-residue chain is Shikimate dehydrogenase (NADP(+)) (266 aa).

Shikimate-binding positions include 16 to 18 and threonine 65; that span reads SKS. Lysine 69 acts as the Proton acceptor in catalysis. Asparagine 90 and aspartate 105 together coordinate shikimate. Residues 128–132 and leucine 211 each bind NADP(+); that span reads GAGGS. Residue tyrosine 213 participates in shikimate binding. Position 233 (glycine 233) interacts with NADP(+).

The protein belongs to the shikimate dehydrogenase family. Homodimer.

It carries out the reaction shikimate + NADP(+) = 3-dehydroshikimate + NADPH + H(+). The protein operates within metabolic intermediate biosynthesis; chorismate biosynthesis; chorismate from D-erythrose 4-phosphate and phosphoenolpyruvate: step 4/7. Involved in the biosynthesis of the chorismate, which leads to the biosynthesis of aromatic amino acids. Catalyzes the reversible NADPH linked reduction of 3-dehydroshikimate (DHSA) to yield shikimate (SA). This is Shikimate dehydrogenase (NADP(+)) from Helicobacter pylori (strain J99 / ATCC 700824) (Campylobacter pylori J99).